A 403-amino-acid chain; its full sequence is Protein-glutamate methylesterase/protein-glutamine glutaminase (403 aa).

The Response regulatory domain occupies 8–126 (AVLIVDDSAL…SAHLRTVSRK (119 aa)). The residue at position 59 (Asp59) is a 4-aspartylphosphate. A CheB-type methylesterase domain is found at 204 to 393 (PLRESGALQI…VSLDDMAATI (190 aa)). Active-site residues include Ser219, His246, and Asp342.

The protein belongs to the CheB family. Phosphorylated by CheA. Phosphorylation of the N-terminal regulatory domain activates the methylesterase activity.

Its subcellular location is the cytoplasm. The enzyme catalyses [protein]-L-glutamate 5-O-methyl ester + H2O = L-glutamyl-[protein] + methanol + H(+). The catalysed reaction is L-glutaminyl-[protein] + H2O = L-glutamyl-[protein] + NH4(+). Its function is as follows. Involved in chemotaxis. Part of a chemotaxis signal transduction system that modulates chemotaxis in response to various stimuli. Catalyzes the demethylation of specific methylglutamate residues introduced into the chemoreceptors (methyl-accepting chemotaxis proteins or MCP) by CheR. Also mediates the irreversible deamidation of specific glutamine residues to glutamic acid. This chain is Protein-glutamate methylesterase/protein-glutamine glutaminase, found in Treponema pallidum (strain Nichols).